A 119-amino-acid chain; its full sequence is MIVGIGIDIIELNRIEKMLDGKLKFMERILTENERNVAKGLKGSRLTEFVAGRFAAKEAYSKAVGTGIGKEVSFLDIEVRNDDRGKPILITSTEHIVHLSISHSKEFAVAQVVLESSSS.

Mg(2+) is bound by residues Asp-8 and Glu-58.

It belongs to the P-Pant transferase superfamily. AcpS family. Mg(2+) serves as cofactor.

It is found in the cytoplasm. The enzyme catalyses apo-[ACP] + CoA = holo-[ACP] + adenosine 3',5'-bisphosphate + H(+). Its function is as follows. Transfers the 4'-phosphopantetheine moiety from coenzyme A to a Ser of acyl-carrier-protein. The polypeptide is Holo-[acyl-carrier-protein] synthase (Bacillus thuringiensis subsp. konkukian (strain 97-27)).